The sequence spans 302 residues: Quinolinate synthase (302 aa).

Positions 24 and 41 each coordinate iminosuccinate. Residue Cys86 coordinates [4Fe-4S] cluster. Residues Tyr112 to Asn114 and Ser129 each bind iminosuccinate. Cys171 is a [4Fe-4S] cluster binding site. Iminosuccinate-binding positions include His197–Glu199 and Thr214. Position 259 (Cys259) interacts with [4Fe-4S] cluster.

This sequence belongs to the quinolinate synthase family. Type 2 subfamily. It depends on [4Fe-4S] cluster as a cofactor.

The protein localises to the cytoplasm. It carries out the reaction iminosuccinate + dihydroxyacetone phosphate = quinolinate + phosphate + 2 H2O + H(+). The protein operates within cofactor biosynthesis; NAD(+) biosynthesis; quinolinate from iminoaspartate: step 1/1. Functionally, catalyzes the condensation of iminoaspartate with dihydroxyacetone phosphate to form quinolinate. This is Quinolinate synthase from Dehalococcoides mccartyi (strain ATCC BAA-2266 / KCTC 15142 / 195) (Dehalococcoides ethenogenes (strain 195)).